The chain runs to 225 residues: tRNA (guanine-N(1)-)-methyltransferase (225 aa).

Residues Gly-112 and 132–137 (IGDYVL) each bind S-adenosyl-L-methionine.

The protein belongs to the RNA methyltransferase TrmD family. In terms of assembly, homodimer.

The protein localises to the cytoplasm. The enzyme catalyses guanosine(37) in tRNA + S-adenosyl-L-methionine = N(1)-methylguanosine(37) in tRNA + S-adenosyl-L-homocysteine + H(+). Its function is as follows. Specifically methylates guanosine-37 in various tRNAs. The protein is tRNA (guanine-N(1)-)-methyltransferase of Porphyromonas gingivalis (strain ATCC BAA-308 / W83).